An 82-amino-acid polypeptide reads, in one-letter code: Small ribosomal subunit protein uS17 (82 aa).

The protein belongs to the universal ribosomal protein uS17 family. Part of the 30S ribosomal subunit.

Its function is as follows. One of the primary rRNA binding proteins, it binds specifically to the 5'-end of 16S ribosomal RNA. The sequence is that of Small ribosomal subunit protein uS17 from Afipia carboxidovorans (strain ATCC 49405 / DSM 1227 / KCTC 32145 / OM5) (Oligotropha carboxidovorans).